The following is a 206-amino-acid chain: Phosphoribosyl-dephospho-CoA transferase (206 aa).

Catalysis depends on residues Asp-131 and Asp-133.

This sequence belongs to the MdcG family.

The enzyme catalyses apo-[malonate decarboxylase ACP] + 2'-(5''-triphospho-alpha-D-ribosyl)-3'-dephospho-CoA = holo-[malonate decarboxylase ACP] + diphosphate. Functionally, transfers 2'-(5-triphosphoribosyl)-3'-dephosphocoenzyme-A to the apo-[acyl-carrier-protein] of the malonate decarboxylase to yield holo-[acyl-carrier-protein]. In Pseudomonas fluorescens (strain Pf0-1), this protein is Phosphoribosyl-dephospho-CoA transferase.